The primary structure comprises 253 residues: Imidazole glycerol phosphate synthase subunit HisF (253 aa).

Residues aspartate 11 and aspartate 130 contribute to the active site.

Belongs to the HisA/HisF family. As to quaternary structure, heterodimer of HisH and HisF.

The protein resides in the cytoplasm. It carries out the reaction 5-[(5-phospho-1-deoxy-D-ribulos-1-ylimino)methylamino]-1-(5-phospho-beta-D-ribosyl)imidazole-4-carboxamide + L-glutamine = D-erythro-1-(imidazol-4-yl)glycerol 3-phosphate + 5-amino-1-(5-phospho-beta-D-ribosyl)imidazole-4-carboxamide + L-glutamate + H(+). The protein operates within amino-acid biosynthesis; L-histidine biosynthesis; L-histidine from 5-phospho-alpha-D-ribose 1-diphosphate: step 5/9. Its function is as follows. IGPS catalyzes the conversion of PRFAR and glutamine to IGP, AICAR and glutamate. The HisF subunit catalyzes the cyclization activity that produces IGP and AICAR from PRFAR using the ammonia provided by the HisH subunit. The polypeptide is Imidazole glycerol phosphate synthase subunit HisF (Cereibacter sphaeroides (strain ATCC 17029 / ATH 2.4.9) (Rhodobacter sphaeroides)).